The following is a 568-amino-acid chain: Methionine--tRNA ligase (568 aa).

Positions 10 to 20 (PYVQSVPHLGN) match the 'HIGH' region motif. Cys143, Cys146, Cys156, and Cys159 together coordinate Zn(2+). The short motif at 333–337 (KFSKS) is the 'KMSKS' region element. Lys336 lines the ATP pocket.

This sequence belongs to the class-I aminoacyl-tRNA synthetase family. MetG type 1 subfamily. Requires Zn(2+) as cofactor.

The protein resides in the cytoplasm. It carries out the reaction tRNA(Met) + L-methionine + ATP = L-methionyl-tRNA(Met) + AMP + diphosphate. In terms of biological role, is required not only for elongation of protein synthesis but also for the initiation of all mRNA translation through initiator tRNA(fMet) aminoacylation. This Metallosphaera sedula (strain ATCC 51363 / DSM 5348 / JCM 9185 / NBRC 15509 / TH2) protein is Methionine--tRNA ligase.